The chain runs to 437 residues: UDP-N-acetylmuramate--L-alanine ligase (437 aa).

108–114 lines the ATP pocket; sequence GAHGKTS.

The protein belongs to the MurCDEF family.

The protein resides in the cytoplasm. The enzyme catalyses UDP-N-acetyl-alpha-D-muramate + L-alanine + ATP = UDP-N-acetyl-alpha-D-muramoyl-L-alanine + ADP + phosphate + H(+). It participates in cell wall biogenesis; peptidoglycan biosynthesis. Its function is as follows. Cell wall formation. This Staphylococcus carnosus (strain TM300) protein is UDP-N-acetylmuramate--L-alanine ligase.